Reading from the N-terminus, the 331-residue chain is Pseudouridylate synthase TRUB2, mitochondrial (331 aa).

D98 acts as the Nucleophile in catalysis. The tract at residues 309-331 is disordered; that stretch reads STGQPWGLKDPSSTLELESCSGQ. Positions 319–331 are enriched in polar residues; that stretch reads PSSTLELESCSGQ.

Belongs to the pseudouridine synthase TruB family. As to quaternary structure, forms a regulatory protein-RNA complex, consisting of RCC1L, NGRN, RPUSD3, RPUSD4, TRUB2, FASTKD2 and 16S mt-rRNA.

Its subcellular location is the mitochondrion matrix. It carries out the reaction a uridine in mRNA = a pseudouridine in mRNA. The enzyme catalyses uridine(55) in tRNA = pseudouridine(55) in tRNA. In terms of biological role, minor enzyme contributing to the isomerization of uridine to pseudouridine (pseudouridylation) of specific mitochondrial mRNAs (mt-mRNAs) such as COXI and COXIII mt-mRNAs. As a component of a functional protein-RNA module, consisting of RCC1L, NGRN, RPUSD3, RPUSD4, TRUB2, FASTKD2 and 16S mitochondrial ribosomal RNA (16S mt-rRNA), controls 16S mt-rRNA abundance and is required for intra-mitochondrial translation. Also catalyzes pseudouridylation of some tRNAs, including synthesis of pseudouridine(55) from uracil-55, in the psi GC loop of a subset of tRNAs. The sequence is that of Pseudouridylate synthase TRUB2, mitochondrial from Mus musculus (Mouse).